A 205-amino-acid polypeptide reads, in one-letter code: Peptidyl-prolyl cis-trans isomerase B (205 aa).

Positions 1 to 20 are cleaved as a signal peptide; it reads MKFSGLWCWLLLFLSVNVIA. The 160-residue stretch at 39–198 folds into the PPIase cyclophilin-type domain; it reads FFDIEHGEEK…EAVKIAKCGE (160 aa).

Belongs to the cyclophilin-type PPIase family. PPIase B subfamily.

The protein localises to the secreted. The catalysed reaction is [protein]-peptidylproline (omega=180) = [protein]-peptidylproline (omega=0). Its activity is regulated as follows. Cyclosporin A (CsA) inhibits CYPB. In terms of biological role, PPIases accelerate the folding of proteins. It catalyzes the cis-trans isomerization of proline imidic peptide bonds in oligopeptides. The polypeptide is Peptidyl-prolyl cis-trans isomerase B (CPR2) (Saccharomyces cerevisiae (strain ATCC 204508 / S288c) (Baker's yeast)).